Consider the following 66-residue polypeptide: Large ribosomal subunit protein bL33c (66 aa).

The protein belongs to the bacterial ribosomal protein bL33 family.

The protein localises to the plastid. It is found in the chloroplast. The polypeptide is Large ribosomal subunit protein bL33c (Coffea arabica (Arabian coffee)).